We begin with the raw amino-acid sequence, 61 residues long: MAKTSLKIKQARHAKFKVRAYTRCKRCGRPHAVYRKFGICRLCFRHLAYNGSLPGVKKSSW.

Positions 24, 27, 40, and 43 each coordinate Zn(2+).

Belongs to the universal ribosomal protein uS14 family. Zinc-binding uS14 subfamily. As to quaternary structure, part of the 30S ribosomal subunit. Contacts proteins S3 and S10. Requires Zn(2+) as cofactor.

In terms of biological role, binds 16S rRNA, required for the assembly of 30S particles and may also be responsible for determining the conformation of the 16S rRNA at the A site. In Mycoplasmoides gallisepticum (strain R(low / passage 15 / clone 2)) (Mycoplasma gallisepticum), this protein is Small ribosomal subunit protein uS14.